A 77-amino-acid polypeptide reads, in one-letter code: Secapin (77 aa).

The signal sequence occupies residues 1 to 32; that stretch reads MKNYSKNATYLITVLLFSFVAMLLIIPSKCEA. Residues 33–52 constitute a propeptide that is removed on maturation; the sequence is VSNDMQPLEARTADLVQQPR. An intrachain disulfide couples cysteine 61 to cysteine 72.

Belongs to the secapin family. Expressed by the venom gland.

The protein resides in the secreted. Functionally, nontoxic peptide. This Apis cerana cerana (Oriental honeybee) protein is Secapin.